The following is a 411-amino-acid chain: MREHFNDGVEFARFLAHRFVTDKAPNSAAALTYTTLFAVVPMMTVMFSMLSLIPAFHGMGESIQTFIFRNFVPSAGEAVETYLKSFTTQARHLTWVGVVFLAVTAFTMLVTIEKAFNEIWRVRQPRRGVGRFLLYWAILSLGPLLLGAGFAVTTYITSLSLLHGPDALPGAETLLGLMPLAFSVAAFTLLYSAVPNARVPVRHALMGGVFTAVLFEAAKTLFGLYVSLFPGYQLIYGAFATVPIFLLWIYLSWMIVLFGAVLVCNLSSSRLWRRRSLPKLIVLLGVLRVFLQRQQLGQSLRLTHLHRAGWLLPEDEWEELLDFLEKEQFVCRAGGGEWVLCRDLGAYSLHRLLNRCPWPMPSRERMPASLDEAWYPPFQQAMERLQVEQEALFGESLAHWLADGTSGAKVT.

6 helical membrane-spanning segments follow: residues 36-56, 92-112, 132-152, 174-194, 207-229, and 244-264; these read LFAVVPMMTVMFSMLSLIPAF, HLTWVGVVFLAVTAFTMLVTI, FLLYWAILSLGPLLLGAGFAV, LLGLMPLAFSVAAFTLLYSAV, GGVFTAVLFEAAKTLFGLYVSLF, and IFLLWIYLSWMIVLFGAVLVC.

This sequence belongs to the UPF0761 family.

It localises to the cell inner membrane. This chain is UPF0761 membrane protein PA0951, found in Pseudomonas aeruginosa (strain ATCC 15692 / DSM 22644 / CIP 104116 / JCM 14847 / LMG 12228 / 1C / PRS 101 / PAO1).